The chain runs to 357 residues: Peptide chain release factor 1 (357 aa).

Residue Q236 is modified to N5-methylglutamine.

This sequence belongs to the prokaryotic/mitochondrial release factor family. Post-translationally, methylated by PrmC. Methylation increases the termination efficiency of RF1.

The protein localises to the cytoplasm. Peptide chain release factor 1 directs the termination of translation in response to the peptide chain termination codons UAG and UAA. The polypeptide is Peptide chain release factor 1 (Mycobacterium ulcerans (strain Agy99)).